We begin with the raw amino-acid sequence, 636 residues long: Chaperone protein DnaK (636 aa).

Residue T198 is modified to Phosphothreonine; by autocatalysis. Positions Y598–K636 are disordered. The span at Q603–N625 shows a compositional bias: basic and acidic residues. Positions V626–K636 are enriched in acidic residues.

It belongs to the heat shock protein 70 family.

Functionally, acts as a chaperone. The chain is Chaperone protein DnaK from Pelobacter propionicus (strain DSM 2379 / NBRC 103807 / OttBd1).